Reading from the N-terminus, the 712-residue chain is Ribosome-releasing factor 2, mitochondrial (712 aa).

The transit peptide at 1–28 directs the protein to the mitochondrion; sequence MQYSLLSAQLRCSRFLLRQQAPFINRCY. The tr-type G domain occupies 30–309; that stretch reads DDIRNIGILA…AVNAYLPTPN (280 aa). GTP is bound by residues 39–46, 103–107, and 157–160; these read AHIDAGKT, DTPGH, and NKMD.

It belongs to the TRAFAC class translation factor GTPase superfamily. Classic translation factor GTPase family. EF-G/EF-2 subfamily.

The protein localises to the mitochondrion. In terms of biological role, mitochondrial GTPase that mediates the disassembly of ribosomes from messenger RNA at the termination of mitochondrial protein biosynthesis. Not involved in the GTP-dependent ribosomal translocation step during translation elongation. The polypeptide is Ribosome-releasing factor 2, mitochondrial (Drosophila virilis (Fruit fly)).